We begin with the raw amino-acid sequence, 246 residues long: tRNA pseudouridine synthase A (246 aa).

D52 (nucleophile) is an active-site residue. Y111 contacts substrate.

The protein belongs to the tRNA pseudouridine synthase TruA family. Homodimer.

It carries out the reaction uridine(38/39/40) in tRNA = pseudouridine(38/39/40) in tRNA. In terms of biological role, formation of pseudouridine at positions 38, 39 and 40 in the anticodon stem and loop of transfer RNAs. In Rhodopseudomonas palustris (strain BisA53), this protein is tRNA pseudouridine synthase A.